The sequence spans 35 residues: Photosystem II reaction center protein T (35 aa).

The chain crosses the membrane as a helical span at residues 3–23 (ALVYTFLLVSTLGIIFFAIFF).

It belongs to the PsbT family. PSII is composed of 1 copy each of membrane proteins PsbA, PsbB, PsbC, PsbD, PsbE, PsbF, PsbH, PsbI, PsbJ, PsbK, PsbL, PsbM, PsbT, PsbY, PsbZ, Psb30/Ycf12, at least 3 peripheral proteins of the oxygen-evolving complex and a large number of cofactors. It forms dimeric complexes.

The protein localises to the plastid. It localises to the chloroplast thylakoid membrane. Its function is as follows. Found at the monomer-monomer interface of the photosystem II (PS II) dimer, plays a role in assembly and dimerization of PSII. PSII is a light-driven water plastoquinone oxidoreductase, using light energy to abstract electrons from H(2)O, generating a proton gradient subsequently used for ATP formation. This Gunnera chilensis (Chilean rhubarb) protein is Photosystem II reaction center protein T.